Reading from the N-terminus, the 237-residue chain is MPVKKKRKAPGVAAAVAEDAGLKKCKISSYCRSQPPARLISGEEDFSRKKCLAWFYEYAGPDEVVGPEGMEKFCEDIGVEPENIIMLVLAWKLEAESMGFFTKEEWLKGMTSLQCDCTEKLQSRFDFLRSQLNDISSFKNIYRYAFDFARDKDQRSLDIDTAKSMLALLLGRTWPLFSVFYQYLEQSKYRVMNKDQWYNVLEFSRTVHADLSNYDEDGAWPVLLDEFVEWQKIRQTS.

Phosphoserine is present on Ser41. The DCUN1 domain maps to Phe46–Lys232.

As to quaternary structure, part of a complex that contains DCUN1D5, CUL1 and RBX1; this interaction is bridged by CUL1. Interacts (via the DCUN1 domain) with the unneddylated cullins: interacts with CUL1, CUL2, CUL3, CUL4A, CUL4B and CUL5; these interactions promote the cullin neddylation and the identity of the cullin dictates the affinity of the interaction. Interacts (via DCUN1 domain) with UBE2M (N-terminally acetylated form) and probably with UBE2F (N-terminally acetylated form). May also interact with regulators or subunits of cullin-RING ligases such as RBX1, RNF7, ELOB and DDB1; these interactions are bridged by cullins. Interacts with CAND1; this interaction is bridged by cullins and strongly inhibits the neddylation of cullins. These CAND-cullin-DCNL complexes can only be neddylated in the presence of a substrate adapter. In terms of processing, phosphorylation at Ser-41 is independent of cullin's interaction. Phosphorylated in response to both TICAM1 and MYD88 dependent Toll-like receptor (TLR) pathway activation. Phosphorylated in response to IL1B stimulation.

It is found in the nucleus. It localises to the cytoplasm. Its subcellular location is the cytoskeleton. The protein localises to the spindle. Contributes to the neddylation of all cullins by transferring NEDD8 from N-terminally acetylated NEDD8-conjugating E2s enzyme to different cullin C-terminal domain-RBX complexes which is necessary for the activation of cullin-RING E3 ubiquitin ligases (CRLs). May play a role in DNA damage response and may participate in cell proliferation and anchorage-independent cell growth. The chain is DCN1-like protein 5 from Rattus norvegicus (Rat).